Here is a 131-residue protein sequence, read N- to C-terminus: Large ribosomal subunit protein bL19 (131 aa).

Positions 111–124 (RIAERAERGSEKGK) are enriched in basic and acidic residues. Residues 111-131 (RIAERAERGSEKGKTTPAAAE) form a disordered region.

This sequence belongs to the bacterial ribosomal protein bL19 family.

Functionally, this protein is located at the 30S-50S ribosomal subunit interface and may play a role in the structure and function of the aminoacyl-tRNA binding site. In Methylobacterium nodulans (strain LMG 21967 / CNCM I-2342 / ORS 2060), this protein is Large ribosomal subunit protein bL19.